A 98-amino-acid polypeptide reads, in one-letter code: NADH-ubiquinone oxidoreductase chain 4L (98 aa).

Transmembrane regions (helical) follow at residues 1–21 (MEQINLNMITAFTIALMGVLT), 28–48 (STLLCLEGMMLSLFILMVLLI), and 61–81 (LILLVFSACEAGVGLALLVTI).

The protein belongs to the complex I subunit 4L family. Core subunit of respiratory chain NADH dehydrogenase (Complex I) which is composed of 45 different subunits.

It is found in the mitochondrion inner membrane. The enzyme catalyses a ubiquinone + NADH + 5 H(+)(in) = a ubiquinol + NAD(+) + 4 H(+)(out). Functionally, core subunit of the mitochondrial membrane respiratory chain NADH dehydrogenase (Complex I) which catalyzes electron transfer from NADH through the respiratory chain, using ubiquinone as an electron acceptor. Part of the enzyme membrane arm which is embedded in the lipid bilayer and involved in proton translocation. This chain is NADH-ubiquinone oxidoreductase chain 4L (MT-ND4L), found in Monodelphis domestica (Gray short-tailed opossum).